We begin with the raw amino-acid sequence, 719 residues long: MKQLFATTARGFEELLKVELTDLGAMDCQITQGGVHFHADEETQYRVLLWTRLASRILLPIVTCKVYSDLDLYSAVVGQNWLDYFDEKAHFMVDFNGTNREIRHTQFGAMRVKDGIVDYFERVGKPRPNVDKSQPDIRIHAYLNREELVISLDLSGDALHMRGYREDTGKAPLRETLAAAIVLRSGWQLGTPLMDPMCGSGTLLIEAAQMQANIAPQLHRLHWGFDFWKGHNQQAWDKVKGEAIELAEQTFNQNQKANFYGCDLDHRVLQKAKRNAQNAGVAHLIQWQQGDVAALKNPFVEAKGTVICNPPYGERLGTTPALIALYSVFGQRLKQQFADWNVSIFSGEPALLDCLRLRSHRQFKAKNGPLDCVQKNYHISARATASDENTQNSPEIDRTLTSSQVAVDFANRLQKNSKKIEKWAKQQGINAYRLYDADLPEYNLAVDRYDDHIVVQEYAAPKNIDENKARQRLLDAVTATLQVTGVETNKLILKVRQKQKGTNQYEKLANKGDYFYVNEYGAKLWVNLTDYLDTGLFLDHRLTRKMLGEMAKGKDVLNLFAYTGSATVHMALGGAKSTTTVDMSNTYLNWAEQNLLLNDLEGKQHKLIQADCLQWLARCDRQFDLIFVDPPTFSNSKRMEDSWDVQRDHIKLMTQLKRILRPNGTIVFSNNKRGFKMDVEGLAALGLSAVEISAKTLPLDFERNKQIHNCWVVRLKADL.

Residues 43–154 (TQYRVLLWTR…REELVISLDL (112 aa)) enclose the THUMP domain.

This sequence belongs to the methyltransferase superfamily. RlmKL family.

It localises to the cytoplasm. The enzyme catalyses guanosine(2445) in 23S rRNA + S-adenosyl-L-methionine = N(2)-methylguanosine(2445) in 23S rRNA + S-adenosyl-L-homocysteine + H(+). It carries out the reaction guanosine(2069) in 23S rRNA + S-adenosyl-L-methionine = N(2)-methylguanosine(2069) in 23S rRNA + S-adenosyl-L-homocysteine + H(+). Its function is as follows. Specifically methylates the guanine in position 2445 (m2G2445) and the guanine in position 2069 (m7G2069) of 23S rRNA. This is Ribosomal RNA large subunit methyltransferase K/L from Pasteurella multocida (strain Pm70).